Here is a 397-residue protein sequence, read N- to C-terminus: MEKTIAINAGSSSLKFQLYDMPSERVITAGIVERIGLKDSIFTITVDGEKIKEIIDIPDHEIAVQMLLEKLINHKVIGSYDEITGIGHRVVHGGERFPESVYIDDQVIKDIEALSELAPLHNPANVTGIKAFRKILPDVVSVAVFDTAFHQTMPPASYLYSLPYSYYEDYGIRKYGFHGTSHKYVSERAAELLGRPVEELRLLTCHLGNGASIAAIEGGKSMDTSMGFTPLAGVSMGTRSGNIDPALIPFIMEKTGKTAEQVLDVLNKESGMLGVSGISSDLRDLEDEAAKGNDRAELALQVFVDRIHKYIGSYAARMNGVDAIIFTAGIGENSSYIREKVLRGLEFMGVYWDPALNQVRGEERFLNYPHSPVKVIIIPTNEELMIARDVETIKNNH.

Asn8 contacts Mg(2+). Lys15 is an ATP binding site. A substrate-binding site is contributed by Arg89. Asp146 serves as the catalytic Proton donor/acceptor. ATP is bound by residues 206 to 210, 281 to 283, and 329 to 333; these read HLGNG, DLR, and GIGEN. Glu382 contributes to the Mg(2+) binding site.

Belongs to the acetokinase family. Homodimer. The cofactor is Mg(2+). Mn(2+) is required as a cofactor.

It localises to the cytoplasm. The enzyme catalyses acetate + ATP = acetyl phosphate + ADP. Its pathway is metabolic intermediate biosynthesis; acetyl-CoA biosynthesis; acetyl-CoA from acetate: step 1/2. Catalyzes the formation of acetyl phosphate from acetate and ATP. Can also catalyze the reverse reaction. The polypeptide is Acetate kinase 2 (Listeria monocytogenes serotype 4b (strain F2365)).